Reading from the N-terminus, the 477-residue chain is Phosphatidylinositol 4-kinase type 2-beta (477 aa).

Residues 1–80 are disordered; sequence MPEPPRDIMA…EDRSISASLS (80 aa). Residue serine 45 is modified to Phosphoserine. The PI3K/PI4K catalytic domain maps to 116–447; the sequence is GVFPERISQG…AQMPCVIVEC (332 aa). The interval 122–128 is G-loop; the sequence is ISQGSSG. ATP-binding residues include serine 129 and lysine 144. The important for substrate binding stretch occupies residues 149–151; sequence EPY. The tract at residues 157-170 is important for interaction with membranes; sequence KWTKYVHKVCCPCC. Residues 253–256 and 267–268 each bind ATP; these read QLFV and RR. The important for interaction with membranes stretch occupies residues 260-268; the sequence is KEAEYWLRR. The catalytic loop stretch occupies residues 297-305; that stretch reads RNTDRGNDN. The segment at 338 to 358 is activation loop; that stretch reads AIDNGLAFPFKHPDEWRAYPF. An ATP-binding site is contributed by aspartate 340. Positions 353-362 are important for interaction with membranes; the sequence is WRAYPFHWAW.

It belongs to the PI3/PI4-kinase family. Type II PI4K subfamily.

It localises to the cytoplasm. The protein localises to the cytosol. Its subcellular location is the golgi apparatus membrane. It is found in the endoplasmic reticulum membrane. The protein resides in the cell membrane. It localises to the early endosome membrane. It catalyses the reaction a 1,2-diacyl-sn-glycero-3-phospho-(1D-myo-inositol) + ATP = a 1,2-diacyl-sn-glycero-3-phospho-(1D-myo-inositol 4-phosphate) + ADP + H(+). Together with PI4K2A and the type III PI4Ks (PIK4CA and PIK4CB) it contributes to the overall PI4-kinase activity of the cell. This contribution may be especially significant in plasma membrane, endosomal and Golgi compartments. The phosphorylation of phosphatidylinositol (PI) to PI4P is the first committed step in the generation of phosphatidylinositol 4,5-bisphosphate (PIP2), a precursor of the second messenger inositol 1,4,5-trisphosphate (InsP3). Contributes to the production of InsP3 in stimulated cells and is likely to be involved in the regulation of vesicular trafficking. The chain is Phosphatidylinositol 4-kinase type 2-beta (Pi4k2b) from Rattus norvegicus (Rat).